The following is a 498-amino-acid chain: Putative antiporter subunit mnhD2 (498 aa).

14 helical membrane-spanning segments follow: residues 2 to 22, 32 to 52, 78 to 98, 108 to 128, 130 to 150, 161 to 181, 209 to 229, 240 to 260, 271 to 291, 308 to 328, 330 to 350, 368 to 388, 403 to 423, and 450 to 470; these read LSNLLILPMLLPFLCALILVF, YLYLGTMTITTIISLMLLIYV, LSLIMVTTASFVITLIMAYGF, YHLPSFILFLSVGVIGSFLTS, LFNLYVMFEIMLLASFVLITL, IIYVVLNIIGSWLFLLGIGLL, ISLIFLVAFSAKAALVLFMWL, LAALFAALMTKVGAYALIRFF, IHPLLVTMAAITMVIGAIGVI, IGFIILGLGTNTFAGINGAIF, LVNDIVVKTLLFFIIGSLVYI, FFGVAFIIMIFAIGGVPPFSG, GNYIGLALMIITSLIAMYSLF, and GILSILVVVVIAIGIAAPVLL.

This sequence belongs to the CPA3 antiporters (TC 2.A.63) subunit D family. May form a heterooligomeric complex that consists of seven subunits: mnhA2, mnhB2, mnhC2, mnhD2, mnhE2, mnhF2 and mnhG2.

Its subcellular location is the cell membrane. The chain is Putative antiporter subunit mnhD2 (mnhD2) from Staphylococcus aureus (strain MRSA252).